Consider the following 621-residue polypeptide: 1-deoxy-D-xylulose-5-phosphate synthase (621 aa).

Residues H80 and 121-123 (GHS) each bind thiamine diphosphate. Mg(2+) is bound at residue D152. Residues 153–154 (GA), N181, Y288, and E370 contribute to the thiamine diphosphate site. N181 contacts Mg(2+).

This sequence belongs to the transketolase family. DXPS subfamily. Homodimer. The cofactor is Mg(2+). Thiamine diphosphate is required as a cofactor.

It catalyses the reaction D-glyceraldehyde 3-phosphate + pyruvate + H(+) = 1-deoxy-D-xylulose 5-phosphate + CO2. Its pathway is metabolic intermediate biosynthesis; 1-deoxy-D-xylulose 5-phosphate biosynthesis; 1-deoxy-D-xylulose 5-phosphate from D-glyceraldehyde 3-phosphate and pyruvate: step 1/1. Its function is as follows. Catalyzes the acyloin condensation reaction between C atoms 2 and 3 of pyruvate and glyceraldehyde 3-phosphate to yield 1-deoxy-D-xylulose-5-phosphate (DXP). In Vibrio campbellii (strain ATCC BAA-1116), this protein is 1-deoxy-D-xylulose-5-phosphate synthase.